A 325-amino-acid polypeptide reads, in one-letter code: Olfactory receptor 5H6 (325 aa).

The Extracellular segment spans residues 1–41; it reads MFLYLCFIFQRTCSEEMEEENATLLTEFVLTGFLHQPDCKI. Asn21 carries N-linked (GlcNAc...) asparagine glycosylation. Residues 42–62 form a helical membrane-spanning segment; it reads PLFLAFLVIYLITIMGNLGLI. Over 63–70 the chain is Cytoplasmic; the sequence is VLIWKDPH. Residues 71 to 91 form a helical membrane-spanning segment; the sequence is LHIPMYLFLGSLAFVDASLSS. Topologically, residues 92-115 are extracellular; that stretch reads TVTPKMLINFLAKSKMISLSECMV. Cys113 and Cys205 are joined by a disulfide. A helical membrane pass occupies residues 116–136; sequence QFFSLVTTVTTECFLLATMAY. At 137–155 the chain is on the cytoplasmic side; sequence DRYVAICKALLYPVIMTNE. Residues 156–176 form a helical membrane-spanning segment; that stretch reads LCIQLLVLSFIGGLLHALIHE. The Extracellular segment spans residues 177–212; that stretch reads AFSFRLTFCNSNIIQHFYCDIIPLLKISCTDSSINF. The chain crosses the membrane as a helical span at residues 213-233; the sequence is LMVFIFAGSVQVFTIGTILIS. Residues 234-253 are Cytoplasmic-facing; it reads YTIILFTILEKKSIKGIRKA. A helical transmembrane segment spans residues 254–274; it reads VSTCGAHLLSVSLYYGPLTFK. Over 275–287 the chain is Extracellular; the sequence is YLGSASPQADDQD. The chain crosses the membrane as a helical span at residues 288-308; it reads MMESLFYTVIVPLLNPMIYSL. The Cytoplasmic segment spans residues 309-325; that stretch reads RNKQVIASFTKMFKSNV.

Belongs to the G-protein coupled receptor 1 family.

It localises to the cell membrane. Its function is as follows. Odorant receptor. This chain is Olfactory receptor 5H6 (OR5H6), found in Homo sapiens (Human).